The sequence spans 249 residues: Ribosomal RNA small subunit methyltransferase J (249 aa).

Residues 101-102, 117-118, 153-154, and Asp-171 each bind S-adenosyl-L-methionine; these read RD, ER, and SS.

This sequence belongs to the methyltransferase superfamily. RsmJ family.

The protein localises to the cytoplasm. It catalyses the reaction guanosine(1516) in 16S rRNA + S-adenosyl-L-methionine = N(2)-methylguanosine(1516) in 16S rRNA + S-adenosyl-L-homocysteine + H(+). In terms of biological role, specifically methylates the guanosine in position 1516 of 16S rRNA. This Salmonella arizonae (strain ATCC BAA-731 / CDC346-86 / RSK2980) protein is Ribosomal RNA small subunit methyltransferase J.